The chain runs to 435 residues: Putative dimethyl sulfoxide reductase membrane subunit C (435 aa).

The next 11 membrane-spanning stretches (helical) occupy residues 22–42 (GWLGVLALLLVIGLGAWAYQL), 57–77 (WGLYIMLFVLFVGLSAGGLIL), 95–115 (LGVLVSLGCIIVAGLLILPDI), 135–155 (VWDFGIVMLYGALNVWYLWLL), 186–206 (FWTAVCALPAAVALHSVTGWI), 220–240 (LVAPVFIAKALVSGLGLLLVV), 257–277 (LTSLGKLLGIFLAFHVVYLLA), 281–301 (LPHAWAHHFGFWAITSNFLIG), 304–324 (VYFWLWTGLGGAVPLLLLATP), 333–353 (IFTASVLAVFGTLFEGIRLVF), and 392–412 (VEIAVTVGVISIGALIVMAGL).

This sequence belongs to the NrfD family. In terms of assembly, probable multiprotein complex that likely consists of DmsA, DmsB and DmsC.

The protein localises to the cell membrane. Dimethyl sulfoxide (DMSO) reductase catalyzes the reduction of dimethyl sulfoxide (DMSO) to dimethyl sulfide (DMS) during anaerobic respiration; it can also use trimethylamine N-oxide (TMAO) as terminal electron acceptor. Subunit C is proposed to be a membrane anchoring subunit. In Halobacterium salinarum (strain ATCC 700922 / JCM 11081 / NRC-1) (Halobacterium halobium), this protein is Putative dimethyl sulfoxide reductase membrane subunit C (dmsC).